A 273-amino-acid chain; its full sequence is Transposable element Tc1 transposase (273 aa).

The protein belongs to the transposase 5 family.

It localises to the nucleus. In terms of biological role, probably essential for transposable element Tc1 transposition. The insertion of Tc1 is the main cause of spontaneous mutations. It is an endonuclease which can produce a single strand nick at the 5'-end of the transposon. The chain is Transposable element Tc1 transposase (tc1a) from Caenorhabditis elegans.